We begin with the raw amino-acid sequence, 346 residues long: Oxidoreductase calI (346 aa).

The segment at 11–33 (VSTPQGRGDGRPTADQVLRDQDP) is disordered. A compositionally biased stretch (basic and acidic residues) spans 18 to 32 (GDGRPTADQVLRDQD). Positions 52, 76, 100, and 128 each coordinate NADP(+). Catalysis depends on serine 181, which acts as the Proton donor. Tyrosine 208, lysine 212, and isoleucine 241 together coordinate NADP(+). Residue tyrosine 208 is the Proton acceptor of the active site. Lysine 212 functions as the Lowers pKa of active site Tyr in the catalytic mechanism.

It belongs to the short-chain dehydrogenases/reductases (SDR) family.

Its pathway is secondary metabolite biosynthesis. Its function is as follows. Oxidoreductase; part of the gene cluster that mediates the biosynthesis of calbistrin A and related compounds. Calbistrin A is a secondary metabolite with an interesting structure that was recently found to have bioactivity against leukemia cells. It consists of two polyketides linked by an ester bond: a bicyclic decalin containing polyketide and a linear 12 carbon dioic acid structure. The polyketide synthase calA is probably responsible for forming the decalin moiety. Because calA lacks a designated enoylreductase (ER) domain, the required activity is provided by the trans-enoyl reductase calK. Following release from the PKS, calF then probably catalyzes the oxidation and the subsequent Diels Alder cycloisomerization that lead to the formation of the decalin moiety. The decalin polyketide backbone includes two C-methyl groups, at C7 and C11 in backbone, of which the C7 position is probably methylated by the methyltransferase domain of calA. A candidate for adding the methyl group at C11, if not done by CalA, is the cluster methyltransferase calH. Several additional tailoring enzymes within the cluster could be involved in the modification of the decalin polyketide product. Those include the 3 cytochrome P450 monooxygenases CalE, CalG and CalL, of which one might be responsible for the introduction of the extra hydroxyl group attached to the backbone of the decalin moiety, at position C9 in the backbone, that allows for attachment of the linear moiety. One tailoring enzyme activity that is expected to be involved in biosynthesis of calbistrin is an acyltransferase for connecting the two polyketide synthase products, and which could be performed by the cluster acyltransferase calJ. The enzyme responsible for the biosynthesis of the linear moiety, probably a second PKS, has not been identified yet. This is Oxidoreductase calI from Penicillium decumbens.